A 250-amino-acid polypeptide reads, in one-letter code: Proteasome subunit alpha (250 aa).

It belongs to the peptidase T1A family. The 20S proteasome core is composed of 14 alpha and 14 beta subunits that assemble into four stacked heptameric rings, resulting in a barrel-shaped structure. The two inner rings, each composed of seven catalytic beta subunits, are sandwiched by two outer rings, each composed of seven alpha subunits. The catalytic chamber with the active sites is on the inside of the barrel. Has a gated structure, the ends of the cylinder being occluded by the N-termini of the alpha-subunits. Is capped by the proteasome-associated ATPase, ARC.

The protein localises to the cytoplasm. It participates in protein degradation; proteasomal Pup-dependent pathway. With respect to regulation, the formation of the proteasomal ATPase ARC-20S proteasome complex, likely via the docking of the C-termini of ARC into the intersubunit pockets in the alpha-rings, may trigger opening of the gate for substrate entry. Interconversion between the open-gate and close-gate conformations leads to a dynamic regulation of the 20S proteasome proteolysis activity. Its function is as follows. Component of the proteasome core, a large protease complex with broad specificity involved in protein degradation. In Mycobacterium sp. (strain JLS), this protein is Proteasome subunit alpha.